The following is a 270-amino-acid chain: Phosphatidylinositol transfer protein alpha isoform (270 aa).

A 1,2-diacyl-sn-glycero-3-phospho-(1D-myo-inositol) is bound by residues T58, K60, E85, N89, T96, and K194. The residue at position 215 (K215) is an N6-acetyllysine. Residues 250-263 (TKRQLDEMRQKDPV) show a composition bias toward basic and acidic residues. Positions 250–270 (TKRQLDEMRQKDPVKGMTADD) are disordered.

This sequence belongs to the PtdIns transfer protein family. PI transfer class I subfamily.

Its subcellular location is the cytoplasm. The protein localises to the nucleus. It carries out the reaction a 1,2-diacyl-sn-glycero-3-phosphocholine(in) = a 1,2-diacyl-sn-glycero-3-phosphocholine(out). It catalyses the reaction a 1,2-diacyl-sn-glycero-3-phospho-(1D-myo-inositol)(in) = a 1,2-diacyl-sn-glycero-3-phospho-(1D-myo-inositol)(out). With respect to regulation, phosphatidylinositol transfer activity is inhibited by N-ethylmaleimide. In terms of biological role, catalyzes the transfer of phosphatidylinositol (PI) and phosphatidylcholine (PC) between membranes. Shows a preference for PI and PC containing shorter saturated or monosaturated acyl chains at the sn-1 and sn-2 positions. Preference order for PC is C16:1 &gt; C16:0 &gt; C18:1 &gt; C18:0 &gt; C20:4 and for PI is C16:1 &gt; C16:0 &gt; C18:1 &gt; C18:0 &gt; C20:4 &gt; C20:3. This is Phosphatidylinositol transfer protein alpha isoform (PITPNA) from Homo sapiens (Human).